The sequence spans 232 residues: GDT1-like protein 5 (232 aa).

6 helical membrane-spanning segments follow: residues 13 to 33 (LAMTVLSEIGDKTFFAAAILA), 40 to 60 (LVLAGCLTSLTVMTALSVSLG), 72 to 92 (THHVTTLLFFVFGILSLWEGF), 135 to 155 (PFVLQFFSPIFIKAFSITFFG), 175 to 195 (FGVVLGGVLAQALCTTAAVMG), and 207 to 227 (MVGLSSGVLFLLFGIMSYLSG).

The protein belongs to the GDT1 family.

The protein localises to the membrane. This is GDT1-like protein 5 from Oryza sativa subsp. japonica (Rice).